The following is a 680-amino-acid chain: MIDRYKHQQLRIGLVSPQQISAWATKIIPNGEIVGEVTKPYTFHYKTNKPEKDGLFCERIFGPIKSGICACGNYRVIGDEKDDPKFCEQCGVEFVDSRIRRYQMGYIKLTCPVTHVWYLKRLPSYIANLLDKPLKELEGLVYCDFSFARPITKKPTFLRLRGSFEYEIQSWKYSIPLFFTTQGFDIFRNREISTGAGAIREQLADLDLRIIIENSLVEWKQLGEEGPTGNEWEDRKIVRRKDFLVRRMELAKHFIRTNIEPEWMVLCLLPVLPPELRPIIQIEGGKLMSSDINELYRRVIYRNNTLTDLLTTSRSTPGELVMCQEKLVQEAVDTLLDNGIRGQPMRDGHNKVYKSFSDVIEGKEGRFRETLLGKRVDYSGRSVIVVGPSLSLHRCGLPREIAIELFQTFVIRGLIRQHLASNIGVAKSQIREKKPIVWEILQEVMQGHPVLLNRAPTLHRLGIQSFQPILVEGRTICLHPLVCKGFNADFDGDQMAVHVPLSLEAQAEARLLMFSHMNLLSPAIGDPISVPTQDMLIGLYVLTSGTRRGICANRYNPCNQKNYQNERIYETNYKYTKEPFFCNSYDAIGAYRQKRINLDSPLWLRWQLDQRVIASREVPIEVHYESFGNYHEIYAHYLIVRSVKKETFCIYIRTTVGHISFYREIEEAIQGFSQACSYDT.

4 residues coordinate Zn(2+): C69, C71, C87, and C90. The Mg(2+) site is built by D489, D491, and D493.

The protein belongs to the RNA polymerase beta' chain family. RpoC1 subfamily. In plastids the minimal PEP RNA polymerase catalytic core is composed of four subunits: alpha, beta, beta', and beta''. When a (nuclear-encoded) sigma factor is associated with the core the holoenzyme is formed, which can initiate transcription. It depends on Mg(2+) as a cofactor. Requires Zn(2+) as cofactor.

It localises to the plastid. The protein localises to the chloroplast. It carries out the reaction RNA(n) + a ribonucleoside 5'-triphosphate = RNA(n+1) + diphosphate. DNA-dependent RNA polymerase catalyzes the transcription of DNA into RNA using the four ribonucleoside triphosphates as substrates. The protein is DNA-directed RNA polymerase subunit beta' of Barbarea verna (Land cress).